We begin with the raw amino-acid sequence, 295 residues long: 2-dehydropantoate 2-reductase (295 aa).

NADP(+)-binding positions include Gly-9–Gly-14, Asn-100, and Ala-126. Asn-100 lines the substrate pocket. Lys-177 functions as the Proton donor in the catalytic mechanism. Substrate is bound by residues Asn-181 and Ser-246. Glu-258 serves as a coordination point for NADP(+).

It belongs to the ketopantoate reductase family.

The protein resides in the cytoplasm. It catalyses the reaction (R)-pantoate + NADP(+) = 2-dehydropantoate + NADPH + H(+). The protein operates within cofactor biosynthesis; (R)-pantothenate biosynthesis; (R)-pantoate from 3-methyl-2-oxobutanoate: step 2/2. Its function is as follows. Catalyzes the NADPH-dependent reduction of ketopantoate into pantoic acid. In Mycobacterium tuberculosis (strain CDC 1551 / Oshkosh), this protein is 2-dehydropantoate 2-reductase.